The sequence spans 257 residues: Indole-3-glycerol phosphate synthase (257 aa).

This sequence belongs to the TrpC family.

It catalyses the reaction 1-(2-carboxyphenylamino)-1-deoxy-D-ribulose 5-phosphate + H(+) = (1S,2R)-1-C-(indol-3-yl)glycerol 3-phosphate + CO2 + H2O. It participates in amino-acid biosynthesis; L-tryptophan biosynthesis; L-tryptophan from chorismate: step 4/5. This Halalkalibacterium halodurans (strain ATCC BAA-125 / DSM 18197 / FERM 7344 / JCM 9153 / C-125) (Bacillus halodurans) protein is Indole-3-glycerol phosphate synthase.